Here is a 620-residue protein sequence, read N- to C-terminus: MAU2 chromatid cohesion factor homolog (620 aa).

TPR repeat units lie at residues 90–123 (FDTA…SQHN), 445–478 (GSFY…ANAE), and 485–518 (SCSL…ASKI).

The protein belongs to the SCC4/mau-2 family. In terms of assembly, component of the cohesin loading complex.

The protein localises to the nucleus. It localises to the nucleoplasm. Required for association of the cohesin complex with chromatin during interphase. Plays a role in sister chromatid cohesion and normal progression through prometaphase. This is MAU2 chromatid cohesion factor homolog from Aedes aegypti (Yellowfever mosquito).